A 154-amino-acid polypeptide reads, in one-letter code: UPF0178 protein in pahZ1 5'region (154 aa).

It belongs to the UPF0178 family.

The protein is UPF0178 protein in pahZ1 5'region of Paucimonas lemoignei (Pseudomonas lemoignei).